The chain runs to 283 residues: Bifunctional protein FolD (283 aa).

NADP(+) is bound by residues 165 to 167 and Ser-190; that span reads GRS.

The protein belongs to the tetrahydrofolate dehydrogenase/cyclohydrolase family. Homodimer.

It carries out the reaction (6R)-5,10-methylene-5,6,7,8-tetrahydrofolate + NADP(+) = (6R)-5,10-methenyltetrahydrofolate + NADPH. The catalysed reaction is (6R)-5,10-methenyltetrahydrofolate + H2O = (6R)-10-formyltetrahydrofolate + H(+). It participates in one-carbon metabolism; tetrahydrofolate interconversion. Catalyzes the oxidation of 5,10-methylenetetrahydrofolate to 5,10-methenyltetrahydrofolate and then the hydrolysis of 5,10-methenyltetrahydrofolate to 10-formyltetrahydrofolate. The polypeptide is Bifunctional protein FolD (Paracidovorax citrulli (strain AAC00-1) (Acidovorax citrulli)).